A 182-amino-acid polypeptide reads, in one-letter code: Large ribosomal subunit protein uL16 (182 aa).

This sequence belongs to the universal ribosomal protein uL16 family.

This chain is Large ribosomal subunit protein uL16, found in Pyrobaculum arsenaticum (strain DSM 13514 / JCM 11321 / PZ6).